The following is a 769-amino-acid chain: Portal protein (769 aa).

The interval 458 to 479 (LEGYVNNLFKTIEGLKDVNSDL) is putative leucine zipper motif. Disordered regions lie at residues 654–675 (RGPR…DDER) and 750–769 (RQLT…DRRS). Basic and acidic residues predominate over residues 760 to 769 (VGCERRDRRS).

It belongs to the herpesviridae portal protein family. As to quaternary structure, homododecamerizes. Interacts with terminase subunits TRM1 and TRM3.

It localises to the virion. The protein resides in the host nucleus. Functionally, forms a portal in the viral capsid through which viral DNA is translocated during DNA packaging. Assembles as a dodecamer at a single fivefold axe of the T=16 icosahedric capsid. Binds to the molecular motor that translocates the viral DNA, termed terminase. This Homo sapiens (Human) protein is Portal protein (54).